We begin with the raw amino-acid sequence, 70 residues long: Probable protein transport protein Sec61 subunit gamma (70 aa).

The Cytoplasmic segment spans residues methionine 1–glutamine 39. The helical transmembrane segment at alanine 40–isoleucine 58 threads the bilayer. At histidine 59–alanine 70 the chain is on the extracellular side.

Belongs to the SecE/SEC61-gamma family. Heterotrimeric complex composed of SEC61-alpha, SEC61-beta and SEC61-gamma.

Its subcellular location is the endoplasmic reticulum membrane. Its function is as follows. Necessary for protein translocation in the endoplasmic reticulum. The chain is Probable protein transport protein Sec61 subunit gamma from Neurospora crassa (strain ATCC 24698 / 74-OR23-1A / CBS 708.71 / DSM 1257 / FGSC 987).